A 581-amino-acid chain; its full sequence is Caprolactamase subunit beta (581 aa).

Zn(2+)-binding residues include Asp41, His99, Asp102, and His124.

The protein belongs to the HyuB family. As to quaternary structure, the caprolactamase is a heterotetramer composed of two alpha subunits (CapA) and two beta subunits (CapB). The cofactor is Zn(2+).

Its activity is regulated as follows. Activity is dependent on the presence of ATP and bicarbonate. The requirement for bicarbonate may be related to allosteric activation through conformational effects, but it is also conceivable that carboxyphosphate is formed and acts as a mediator in caprolactam activation, forming carboxy- or phospholactim. Functionally, component of a caprolactamase involved in the degradation of caprolactam, an industrial compound mainly used in the production of Nylon 6. Catalyzes the ATP-dependent hydrolysis of the caprolactam ring to form 6-aminocaproic acid (6-ACA). The beta subunit is responsible for hydrolytic lactam ring opening. The enzyme cannot use 5-oxoproline. This chain is Caprolactamase subunit beta, found in Pseudomonas jessenii.